Consider the following 89-residue polypeptide: SAP domain-containing new25 (89 aa).

Residues 44-78 form the SAP domain; it reads PSQWSKKQLIEYCKKNSLKTSGSHEELVIRVQNHL.

The polypeptide is SAP domain-containing new25 (new25) (Schizosaccharomyces pombe (strain 972 / ATCC 24843) (Fission yeast)).